We begin with the raw amino-acid sequence, 383 residues long: MIIASTFDYRKAAKRRLPPFLFHYIDGGAYAEETLRRNCSDLQALALRQRILRQVGGVDLSIKLFEQRLDLPIVLAPVGLTGMYARRGEVQAAHAATAKGIPFTLSSVSVCPIAEVQEAVGGGFWFQLYVLKDRGFMRDALERAWASGVRTLVFTVDMPIPGARYRDAHSGMSGPYAGLRRFLQAFTHPHWAWNVGIMGRPHDLGNVSTYLEKKIALDDYVGWLGANFDPSIGWHDLQWIRDFWKGKMILKGILDPEDAREAVQFGADGIVVSNHGGRQLDGVLSTARALPAIAEAVKNDLVILADSGVRSGLDVVRMIAQGADAVMIGRAFVYALAAAGEKGVAHLLDLFANEMRVAMTLTGAQTLKEITCESLVNTDAFKQ.

The FMN hydroxy acid dehydrogenase domain occupies 1–380; that stretch reads MIIASTFDYR…TCESLVNTDA (380 aa). Tyr24 contacts substrate. The FMN site is built by Ser106 and Gln127. Residue Tyr129 coordinates substrate. Thr155 contacts FMN. Arg164 contacts substrate. Lys251 is an FMN binding site. The Proton acceptor role is filled by His275. Arg278 contributes to the substrate binding site. Position 306–330 (306–330) interacts with FMN; it reads DSGVRSGLDVVRMIAQGADAVMIGR.

This sequence belongs to the FMN-dependent alpha-hydroxy acid dehydrogenase family. It depends on FMN as a cofactor.

It is found in the cell inner membrane. The enzyme catalyses (S)-lactate + A = pyruvate + AH2. Catalyzes the conversion of L-lactate to pyruvate. Is coupled to the respiratory chain. This chain is L-lactate dehydrogenase, found in Bartonella tribocorum (strain CIP 105476 / IBS 506).